A 477-amino-acid chain; its full sequence is Glycogen synthase (477 aa).

ADP-alpha-D-glucose is bound at residue K15.

The protein belongs to the glycosyltransferase 1 family. Bacterial/plant glycogen synthase subfamily.

It catalyses the reaction [(1-&gt;4)-alpha-D-glucosyl](n) + ADP-alpha-D-glucose = [(1-&gt;4)-alpha-D-glucosyl](n+1) + ADP + H(+). It functions in the pathway glycan biosynthesis; glycogen biosynthesis. Functionally, synthesizes alpha-1,4-glucan chains using ADP-glucose. The protein is Glycogen synthase of Streptococcus pneumoniae (strain Hungary19A-6).